A 154-amino-acid polypeptide reads, in one-letter code: MAPARAGCCPLLLLLLGLWVAEVLVRAKPKDMTSSQWFKTQHVQPSPQACNSAMSIINKYTERCKDLNTFLHEPFSSVAITCQTPNIACKNSCKNCHQSHGPMSLTMGELTSGKYPNCRYKEKHLNTPYIVACDPPQQGDPGYPLVPVHLDKVV.

Residues M1 to A27 form the signal peptide. H42 functions as the Proton acceptor in the catalytic mechanism. 4 disulfide bridges follow: C50/C93, C64/C118, C82/C133, and C89/C96. Residues K65–T69 and K90 contribute to the substrate site. The active-site Proton donor is the H149.

The protein belongs to the pancreatic ribonuclease family. Expressed prominently in the placenta and is not detected in any other tissues examined.

Its subcellular location is the secreted. Functionally, has a low ribonuclease activity. The sequence is that of Ribonuclease 8 (RNASE8) from Homo sapiens (Human).